The primary structure comprises 200 residues: ATP synthase subunit s, mitochondrial (200 aa).

A mitochondrion-targeting transit peptide spans 1–25 (MMMFGKISRQLCSLKKIPWSCDSRY). Residues 1–61 (MMMFGKISRQ…SEWLLRCGAK (61 aa)) are N-terminal domain. Gly-59 lines the Mg(2+) pocket. LRR repeat units lie at residues 62–87 (VRYCGHQKWLHDYNTLPGSSIDRYKI), 88–116 (QAIDATDSCIMDIGLDHMVGLEHVEKITL), 117–141 (CKCHYIEDNCLQRLSQLENLRKSLL), and 142–173 (ELEIIACGNVTDNGVIALRHFRNLKYLFLSDL). Thr-93 contributes to the Mg(2+) binding site.

This sequence belongs to the ATP synthase subunit s family. Homotetramer. Associates with ATP synthase.

The protein resides in the mitochondrion. The protein localises to the mitochondrion inner membrane. In terms of biological role, involved in regulation of mitochondrial membrane ATP synthase. Necessary for H(+) conduction of ATP synthase. Facilitates energy-driven catalysis of ATP synthesis by blocking a proton leak through an alternative proton exit pathway. This chain is ATP synthase subunit s, mitochondrial (Dmac2l), found in Mus musculus (Mouse).